A 1355-amino-acid polypeptide reads, in one-letter code: DNA-directed RNA polymerase subunit beta' (1355 aa).

Residues cysteine 219, cysteine 293, cysteine 300, and cysteine 303 each contribute to the Zn(2+) site. The tract at residues 1331–1355 (AEVEVDDEVDDDYEDDDEDDDDYED) is disordered.

This sequence belongs to the RNA polymerase beta' chain family. RpoC2 subfamily. As to quaternary structure, in cyanobacteria the RNAP catalytic core is composed of 2 alpha, 1 beta, 1 beta', 1 gamma and 1 omega subunit. When a sigma factor is associated with the core the holoenzyme is formed, which can initiate transcription. Requires Zn(2+) as cofactor.

It catalyses the reaction RNA(n) + a ribonucleoside 5'-triphosphate = RNA(n+1) + diphosphate. Its function is as follows. DNA-dependent RNA polymerase catalyzes the transcription of DNA into RNA using the four ribonucleoside triphosphates as substrates. The polypeptide is DNA-directed RNA polymerase subunit beta' (Nostoc sp. (strain PCC 7120 / SAG 25.82 / UTEX 2576)).